The primary structure comprises 962 residues: SH3 domain-binding protein 4 (962 aa).

An SH3 1 domain is found at 55–114; it reads GNAKEVIAIKDYCPNNFTTLKFSKGDHLYVLDTSGGEWWYAHNTTEMGYIPSSYVQPLNY. Serine 131, serine 245, serine 250, serine 278, and serine 295 each carry phosphoserine. Residues 316-453 form the ZU5 domain; the sequence is TNIVCKLDSS…LEPCMYLAIV (138 aa). Serine 636 bears the Phosphoserine mark. The SH3 2 domain occupies 653-723; that stretch reads SSLKFGKLLK…HTKNVLVVGK (71 aa).

Homodimer or homooligomer. Interacts with DNM2, EPS15, clathrin, the adapter protein complex 2/AP-2 and TFRC. Interacts with the Rag GTPases RRAGA, RRAGB, RRAGC and RRAGD; the interaction is most probably direct, preferentially occurs with their inactive GDP-bound form and is negatively regulated by amino acids. Post-translationally, phosphorylated upon EGF stimulation. Phosphorylation prevents interaction with DNM2.

It is found in the membrane. Its subcellular location is the clathrin-coated pit. The protein localises to the cytoplasmic vesicle. The protein resides in the clathrin-coated vesicle. It localises to the nucleus. May function in transferrin receptor internalization at the plasma membrane through a cargo-specific control of clathrin-mediated endocytosis. Alternatively, may act as a negative regulator of the amino acid-induced TOR signaling by inhibiting the formation of active Rag GTPase complexes. Preferentially binds inactive Rag GTPase complexes and prevents their interaction with the mTORC1 complex inhibiting its relocalization to lysosomes and its activation. Thereby, may indirectly regulate cell growth, proliferation and autophagy. This is SH3 domain-binding protein 4 (Sh3bp4) from Mus musculus (Mouse).